The sequence spans 432 residues: D-amino acid dehydrogenase (432 aa).

3 to 17 (VVILGSGVVGVTSAW) is an FAD binding site.

Belongs to the DadA oxidoreductase family. It depends on FAD as a cofactor.

The enzyme catalyses a D-alpha-amino acid + A + H2O = a 2-oxocarboxylate + AH2 + NH4(+). Its pathway is amino-acid degradation; D-alanine degradation; NH(3) and pyruvate from D-alanine: step 1/1. Functionally, oxidative deamination of D-amino acids. The protein is D-amino acid dehydrogenase of Salmonella dublin (strain CT_02021853).